The primary structure comprises 378 residues: T-cell immunoglobulin and mucin domain-containing protein 4 (378 aa).

An N-terminal signal peptide occupies residues 1-24; that stretch reads MSKEPLILWLMIEFWWLYLTPVTS. The Ig-like V-type domain occupies 25 to 126; sequence ETVVTEVLGH…PGWFNDVKIN (102 aa). Residues 25 to 314 are Extracellular-facing; it reads ETVVTEVLGH…SMKNEMPISQ (290 aa). Intrachain disulfides connect Cys40–Cys112, Cys53–Cys64, and Cys59–Cys111. Disordered stretches follow at residues 136 to 160 and 269 to 304; these read TTTH…TRQM and WKTS…GIPM. Residues 269–297 are compositionally biased toward polar residues; sequence WKTSDSVSSPQPGASDTAVPEQNKTTKTG. An N-linked (GlcNAc...) asparagine glycan is attached at Asn291. A helical transmembrane segment spans residues 315-335; the sequence is LLMIIAPSLGFVLFALFVAFL. Topologically, residues 336–378 are cytoplasmic; that stretch reads LRGKLMETYCSQKHTRLDYIGDSKNVLNDVQHGREDEDGLFTL. The residue at position 358 (Ser358) is a Phosphoserine.

The protein belongs to the immunoglobulin superfamily. TIM family. In terms of assembly, interacts with MERTK; this interaction enhances TIMD4-mediated efferocytosis. Interacts with EPHA2.

Its subcellular location is the cell membrane. The protein localises to the secreted. The protein resides in the extracellular exosome. Functionally, phosphatidylserine receptor that plays different role in immune response including phagocytosis of apoptotic cells and T-cell regulation. Controls T-cell activation in a bimodal fashion, decreasing the activation of naive T-cells by inducing cell cycle arrest, while increasing proliferation of activated T-cells by activating AKT1 and ERK1/2 phosphorylations and subsequent signaling pathways. Also plays a role in efferocytosis which is the process by which apoptotic cells are removed by phagocytic cells. Mechanistically, promotes the engulfment of apoptotic cells or exogenous particles by securing them to phagocytes through direct binding to phosphatidylserine present on apoptotic cells, while other engulfment receptors such as MERTK efficiently recognize apoptotic cells and mediate their ingestion. Additionally, promotes autophagy process by suppressing NLRP3 inflammasome activity via activation of LKB1/PRKAA1 pathway in a phosphatidylserine-dependent mechanism. (Microbial infection) Plays a positive role in exosome-mediated trafficking of HIV-1 virus and its entry into immune cells. The protein is T-cell immunoglobulin and mucin domain-containing protein 4 (TIMD4) of Homo sapiens (Human).